The primary structure comprises 384 residues: MALNDCFLLNLEVDHFMHCNISSHSADLPVNDDWSHPGILYVIPAVYGVIILIGLIGNITLIKIFCTVKSMRNVPNLFISSLALGDLLLLITCAPVDASRYLADRWLFGRIGCKLIPFIQLTSVGVSVFTLTALSADRYKAIVRPMDIQASHALMKICLKAAFIWIISMLLAIPEAVFSDLHPFHEESTNQTFISCAPYPHSNELHPKIHSMASFLVFYVIPLSIISVYYYFIAKNLIQSAYNLPVEGNIHVKKQIESRKRLAKTVLVFVGLFAFCWLPNHVIYLYRSYHYSEVDTSMLHFVTSICARLLAFTNSCVNPFALYLLSKSFRKQFNTQLLCCQPGLIIRSHSTGRSTTCMTSLKSTNPSVATFSLINGNICHERYV.

The Extracellular portion of the chain corresponds to 1–38 (MALNDCFLLNLEVDHFMHCNISSHSADLPVNDDWSHPG). N20 is a glycosylation site (N-linked (GlcNAc...) asparagine). The chain crosses the membrane as a helical span at residues 39-62 (ILYVIPAVYGVIILIGLIGNITLI). Over 63–76 (KIFCTVKSMRNVPN) the chain is Cytoplasmic. The helical transmembrane segment at 77 to 96 (LFISSLALGDLLLLITCAPV) threads the bilayer. The Extracellular portion of the chain corresponds to 97 to 114 (DASRYLADRWLFGRIGCK). Cysteines 113 and 196 form a disulfide. The chain crosses the membrane as a helical span at residues 115–136 (LIPFIQLTSVGVSVFTLTALSA). The Cytoplasmic segment spans residues 137-152 (DRYKAIVRPMDIQASH). The helical transmembrane segment at 153–174 (ALMKICLKAAFIWIISMLLAIP) threads the bilayer. Over 175–208 (EAVFSDLHPFHEESTNQTFISCAPYPHSNELHPK) the chain is Extracellular. A helical membrane pass occupies residues 209 to 234 (IHSMASFLVFYVIPLSIISVYYYFIA). Over 235–264 (KNLIQSAYNLPVEGNIHVKKQIESRKRLAK) the chain is Cytoplasmic. A helical membrane pass occupies residues 265–285 (TVLVFVGLFAFCWLPNHVIYL). Residues 286–298 (YRSYHYSEVDTSM) are Extracellular-facing. Residues 299 to 325 (LHFVTSICARLLAFTNSCVNPFALYLL) traverse the membrane as a helical segment. Topologically, residues 326-384 (SKSFRKQFNTQLLCCQPGLIIRSHSTGRSTTCMTSLKSTNPSVATFSLINGNICHERYV) are cytoplasmic. The S-palmitoyl cysteine moiety is linked to residue C339. S350 is subject to Phosphoserine.

This sequence belongs to the G-protein coupled receptor 1 family. As to expression, highly expressed in pancreas. Also expressed in stomach, adrenal cortex and brain. In brain, expressed in cells throughout the cortex.

It localises to the cell membrane. Functionally, receptor for gastrin-releasing peptide (GRP). Signals via association with G proteins that activate a phosphatidylinositol-calcium second messenger system, resulting in Akt phosphorylation. Contributes to the regulation of food intake. Contributes to the perception of prurient stimuli and transmission of itch signals in the spinal cord that promote scratching behavior, but does not play a role in the perception of pain. Contributes primarily to nonhistaminergic itch sensation. In one study, shown to act in the amygdala as part of an inhibitory network which inhibits memory specifically related to learned fear. In another study, shown to contribute to disinhibition of glutamatergic cells in the auditory cortex via signaling on vasoactive intestinal peptide-expressing cells which leads to enhanced auditory fear memories. Contributes to the induction of sighing through signaling in the pre-Botzinger complex, a cluster of several thousand neurons in the ventrolateral medulla responsible for inspiration during respiratory activity. The sequence is that of Gastrin-releasing peptide receptor (GRPR) from Homo sapiens (Human).